Reading from the N-terminus, the 1034-residue chain is MEADGAGEQMRPLLTRGPDEEAVVDLGKTSSTVNTKFEKEELESHRAVYVGVHVPFSKESRRRHKHRGHKHHHRRRKDKDSDKEDGRESPSYDTPSQRVQFILGTEDDDEEHIPHDLFTEMDELCYRDGEEYEWKETARWLKFEEDVEDGGDRWSKPYVATLSLHSLFELRSCILNGTVMLDMRASTLDEIADMVLDNMIASGQLDDSIRENVREALLKRHHHQNEKRFTSRIPLVRSFADIGILASPQSAPGNLDNSKSGEMKGNGSGGSRENSTVDFSKVDMNFMRKIPTGAEASNVLVGEVDFLERPIIAFVRLAPAVLLSGLTEVPVPTRFLFLLLGPAGKAPQYHEIGRSIATLMTDEIFHDVAYKAKDRNDLLSGIDEFLDQVTVLPPGEWDPSIRIEPPKSVPSQEKRKIPVFPNGSAAMSVGPPKEDDHHAGPELQRTGRLFGGLILDIKRKAPFFLSDFKDALSLQCLASILFLYCACMSPVITFGGLLGEATEGRISAIESLFGASLTGIAYSLFAGQPLTILGSTGPVLVFEKILFKFCRDYHLSYLSLRTSIGLWTSFLCIVLVATDASSLVCYITRFTEEAFAALICIIFIYEALEKLFHLGEIYAFNMHNNLDELTSYTCVCAEPSNPSNETLELWKRKNITAYSVSWGNLTVSECKTFHGMFVGSACGPHGPYVPDVLFWCVVLFFTTFFLSSFLKQFKTKGYFPTKVRSTISDFAVFLTIVIMVAIDYLVGIPSPKLHVPEKFEPTDPSRGWIISPLGDNPWWTLLIAAVPALLCTILIFMDQQITAVIINRKEHKLKFIPMPVLYGVFLYMGVSSLKGIQFFDRIKLFGMPAKHQPDLIYLRYVPLWKVHVFTVVQLTCLVLLWVIKASAAAVVFPMMVLALVFVRKLMDLCFTKRELSWLDDLMPESKKKKEDDKKKKEKEEAERMLQDDEDTVHLPFERGSLLQIPVKTLKYSIDPSVVNISDEMAKTAQWKALSMNTENAKVTRPNTSPEKPVSVTINFEDEPSKKYMDAETSL.

Disordered regions lie at residues M1 to S31 and H53 to V99. The Extracellular segment spans residues M1 to C476. Residues S57, S60, S89, and S155 each carry the phosphoserine modification. Over residues S60 to K77 the composition is skewed to basic residues. Over residues D78–P90 the composition is skewed to basic and acidic residues. The N-linked (GlcNAc...) asparagine glycan is linked to N176. Phosphoserine occurs at positions 238, 250, 260, 263, 268, and 271. A compositionally biased stretch (polar residues) spans S250–S260. Positions S250–T276 are disordered. N274 carries an N-linked (GlcNAc...) asparagine glycan. Phosphoserine is present on residues S275 and S424. The chain crosses the membrane as a helical span at residues L477–L497. Over L498–R505 the chain is Cytoplasmic. The chain crosses the membrane as a helical span at residues I506 to A526. Residues G527 to S563 are Extracellular-facing. The chain crosses the membrane as a helical span at residues I564 to V584. The Cytoplasmic portion of the chain corresponds to C585–E593. Residues A594–L614 form a helical membrane-spanning segment. At G615–H685 the chain is on the extracellular side. C634 and C636 are disulfide-bonded. 3 N-linked (GlcNAc...) asparagine glycosylation sites follow: N644, N654, and N664. A disulfide bond links C670 and C682. The helical transmembrane segment at G686 to L706 threads the bilayer. Over S707 to D729 the chain is Cytoplasmic. A helical transmembrane segment spans residues F730–S750. The Extracellular portion of the chain corresponds to P751–N776. Residues P777 to M797 form a helical membrane-spanning segment. Over D798–K812 the chain is Cytoplasmic. A helical membrane pass occupies residues L813 to L833. Positions F815–L915 are essential for cell membrane localization and transport activity. At K834 to C876 the chain is on the extracellular side. Residues L877–L897 form a helical membrane-spanning segment. The Cytoplasmic portion of the chain corresponds to A898–L1034. The interval L918–D920 is CA2-binding. The tract at residues K926–Q946 is disordered. T951 carries the post-translational modification Phosphothreonine. Phosphoserine is present on residues S960 and S1033. A PDZ-binding motif is present at residues E1031–L1034.

Belongs to the anion exchanger (TC 2.A.31) family. As to quaternary structure, forms a complex with ATP6V1B1 and NHERF1/EBP50. Interacts in a pH dependent-manner with CA2/carbonic anhydrase 2. Interacts with CFTR through NHERF1/EBP50. Interacts with USH1C. As to expression, expressed in the spiral ligament throughout the cochlea and in photoreceptors of the outer plexiform layer of the retina (at protein level).

The protein localises to the basolateral cell membrane. The protein resides in the apical cell membrane. Its subcellular location is the cell projection. It localises to the stereocilium. It is found in the cell membrane. It catalyses the reaction hydrogencarbonate(in) + Na(+)(in) = hydrogencarbonate(out) + Na(+)(out). Its activity is regulated as follows. Activity is inhibited by 4,4'-di-isothiocyanatostilbene-2,2'-disulfonic acid (DIDS - an inhibitor of several anion channels and transporters). Functionally, electroneutral sodium- and bicarbonate-dependent cotransporter with a Na(+):HCO3(-) 1:1 stoichiometry. Mediates the sodium-dependent bicarbonate transport important for pH recovery after acid load as well as for regulation of steady-state pH in the duodenum and vascular smooth muscle cells. Plays a key role in macrophage acidification, mediating bicarbonate import into the cytoplasm which is crucial for net acid extrusion and maintenance of cytoplasmic pH during phagocytosis. Provides cellular bicarbonate for de novo purine and pyrimidine synthesis and is a key mediator of de novo nucleotide synthesis downstream of mTORC1 signaling in proliferating cells. May be involved in maintaining locomotor activity, exploratory behavior, and hearing. In Mus musculus (Mouse), this protein is Sodium bicarbonate cotransporter 3 (Slc4a7).